Reading from the N-terminus, the 144-residue chain is 3-hydroxyacyl-[acyl-carrier-protein] dehydratase FabZ (144 aa).

His51 is a catalytic residue.

This sequence belongs to the thioester dehydratase family. FabZ subfamily.

It is found in the cytoplasm. The enzyme catalyses a (3R)-hydroxyacyl-[ACP] = a (2E)-enoyl-[ACP] + H2O. Functionally, involved in unsaturated fatty acids biosynthesis. Catalyzes the dehydration of short chain beta-hydroxyacyl-ACPs and long chain saturated and unsaturated beta-hydroxyacyl-ACPs. The protein is 3-hydroxyacyl-[acyl-carrier-protein] dehydratase FabZ (fabZ2) of Lactococcus lactis subsp. lactis (strain IL1403) (Streptococcus lactis).